Here is a 267-residue protein sequence, read N- to C-terminus: Diphthine--ammonia ligase (267 aa).

Residue Tyr-97 is modified to Phosphotyrosine.

This sequence belongs to the Diphthine--ammonia ligase family.

The catalysed reaction is diphthine-[translation elongation factor 2] + NH4(+) + ATP = diphthamide-[translation elongation factor 2] + AMP + diphosphate + H(+). It functions in the pathway protein modification; peptidyl-diphthamide biosynthesis. Functionally, amidase that may catalyze the last step of diphthamide biosynthesis using ammonium and ATP. Diphthamide biosynthesis consists in the conversion of an L-histidine residue in the translation elongation factor (EEF2) to diphthamide. This Homo sapiens (Human) protein is Diphthine--ammonia ligase.